The following is a 515-amino-acid chain: Protein disulfide-isomerase (515 aa).

A signal peptide spans 1–25 (MAISKVWISLLLALAVVLSAPAARA). Residues 26–150 (EEAAAAEEAA…IVEYLKKQVG (125 aa)) enclose the Thioredoxin 1 domain. Catalysis depends on nucleophile residues C68 and C71. The cysteines at positions 68 and 71 are disulfide-linked. An N-linked (GlcNAc...) asparagine glycan is attached at N283. Residues 346-489 (LKEQVEAGQI…IVDYIKKNKE (144 aa)) form the Thioredoxin 2 domain. Active-site nucleophile residues include C412 and C415. The cysteines at positions 412 and 415 are disulfide-linked. Residues 494–509 (AAAAATEKAAEPAATE) show a composition bias toward low complexity. The interval 494 to 515 (AAAAATEKAAEPAATEPLKDEL) is disordered. Positions 512–515 (KDEL) match the Prevents secretion from ER motif.

It belongs to the protein disulfide isomerase family.

It is found in the endoplasmic reticulum lumen. It catalyses the reaction Catalyzes the rearrangement of -S-S- bonds in proteins.. Its function is as follows. Participates in the folding of proteins containing disulfide bonds, may be involved in glycosylation, prolyl hydroxylation and triglyceride transfer. The protein is Protein disulfide-isomerase (PDI) of Triticum aestivum (Wheat).